Here is a 473-residue protein sequence, read N- to C-terminus: Sun domain-containing protein 1 (473 aa).

Residues 1 to 47 (MALRHTISPQFSNRHSPPVTRSVSRTGVHQPLDTSTPVTRRDSQPGT) are disordered. The segment covering 7–47 (ISPQFSNRHSPPVTRSVSRTGVHQPLDTSTPVTRRDSQPGT) has biased composition (polar residues). Coiled-coil stretches lie at residues 163 to 191 (ISNL…LENV) and 204 to 235 (EELK…STKI). Residues 237 to 257 (HSTPEKAPETAPTASLPPSSQ) are disordered. Over residues 248–257 (PTASLPPSSQ) the composition is skewed to polar residues. The helical transmembrane segment at 262–282 (HITRRALLGVNVANSLIGASI) threads the bilayer. The region spanning 279–443 (GASIDHSCSS…YLIRVYGEPV (165 aa)) is the SUN domain. The disordered stretch occupies residues 443–473 (VDPPKETQPMTDNGTESKLESAIVNSVSETA).

It localises to the nucleus membrane. Its subcellular location is the nucleus envelope. Functionally, involved in centrosome attachment to the nucleus. Required for zyg-12 localization to the nuclear envelope. Together with pot-1, it is required to anchor telomeres to the nuclear envelope in embryos. The sequence is that of Sun domain-containing protein 1 from Caenorhabditis elegans.